The chain runs to 475 residues: MATLYSQVPSVSAVFSLYTSFSAITMLFRTILNEIVPKRIREYIAMKAVDFFSSYFQSDFTFVIEQRWEFVENQTFRAAEVYLPTCLAGLSTGKLLVGSSNLKNPAAEPKLGIPVNTKIIDNFEGIHLEWTLHSVETKKYLPEKRYFHLTCKKEFREKIMTDYFTYLAKSAEKIMSHRENLKIYTYNQDRSKWESAIFEHHTTFETLAVEPDLKKTLIDDLDAFSKGKDFFKSVGRAWKRGYLLYGPPGTGKSSMVAAIANHMKYHIYDLQIQSVRDDGELREILTSTKNRSILLIEDIDCGADASRRRQSKKKEEDGGEDDGEPQKRKKKFEVGISLSGLLNFVDGLWSSCGEEKIIIFTTNHKEKLDPALLRPGRMDVHILMDNCTPFVFKKLVALYLKTDEHVLFDPIEKLILEVSSTPAEVTQQLMASKNADIALKGLAEFLENKKLKKGEDSSVEEEGEIEDAETKEAET.

Residues 11-28 form a helical membrane-spanning segment; that stretch reads VSAVFSLYTSFSAITMLF. Residue Thr-85 is modified to Phosphothreonine. 246–253 provides a ligand contact to ATP; the sequence is GPPGTGKS. 2 disordered regions span residues 306-328 and 453-475; these read SRRRQSKKKEEDGGEDDGEPQKR and KGEDSSVEEEGEIEDAETKEAET. Acidic residues predominate over residues 457–467; the sequence is SSVEEEGEIED.

The protein belongs to the AAA ATPase family. BCS1 subfamily. It depends on Mg(2+) as a cofactor. In terms of tissue distribution, expressed in developing shoots.

It is found in the membrane. It carries out the reaction ATP + H2O = ADP + phosphate + H(+). The protein is AAA-ATPase At1g43910 of Arabidopsis thaliana (Mouse-ear cress).